Here is a 275-residue protein sequence, read N- to C-terminus: Lectin (275 aa).

A signal peptide spans 1–30 (MASLQTQMISFYLIFLSILLTTIFFFKVNS). D-glucose is bound by residues D111 and G129. 2 residues coordinate Mn(2+): E149 and D151. Ca(2+) contacts are provided by D151, F153, N155, and D159. Mn(2+) contacts are provided by D159 and H166. A propeptide spanning residues 211-217 (NSLEEEN) is cleaved from the precursor. Positions 246 and 247 each coordinate D-glucose. Residues 270–275 (KQAADA) constitute a propeptide that is removed on maturation.

The protein belongs to the leguminous lectin family. Heterotetramer of two alpha and two beta chains. In terms of processing, the mature form consists of two chains, alpha and beta, produced by cleavage of the immature protein. These remain cleaved, yet fold together to form one subunit.

Functionally, D-mannose specific lectin. The protein is Lectin of Lens culinaris (Lentil).